The following is a 183-amino-acid chain: Probable transcription termination protein NusA (183 aa).

The KH domain maps to Asp32–Lys98. Residues Arg149–Glu183 form a disordered region. Positions Val156–Glu183 are enriched in basic and acidic residues.

This sequence belongs to the NusA family.

The protein resides in the cytoplasm. Participates in transcription termination. The polypeptide is Probable transcription termination protein NusA (Methanocaldococcus jannaschii (strain ATCC 43067 / DSM 2661 / JAL-1 / JCM 10045 / NBRC 100440) (Methanococcus jannaschii)).